The sequence spans 550 residues: Chaperonin GroEL 1 (550 aa).

ATP contacts are provided by residues 29 to 32 (TIGP), 86 to 90 (DGTTT), glycine 413, 477 to 479 (NAA), and aspartate 493. Residues 524-550 (AVSDGDHGHSHGHGHSHGHSHPQGPGF) form a disordered region. The span at 533–543 (SHGHGHSHGHS) shows a compositional bias: basic residues.

The protein belongs to the chaperonin (HSP60) family. Forms a cylinder of 14 subunits composed of two heptameric rings stacked back-to-back. Interacts with the co-chaperonin GroES.

It is found in the cytoplasm. It carries out the reaction ATP + H2O + a folded polypeptide = ADP + phosphate + an unfolded polypeptide.. Functionally, together with its co-chaperonin GroES, plays an essential role in assisting protein folding. The GroEL-GroES system forms a nano-cage that allows encapsulation of the non-native substrate proteins and provides a physical environment optimized to promote and accelerate protein folding. The chain is Chaperonin GroEL 1 from Frankia alni (strain DSM 45986 / CECT 9034 / ACN14a).